The following is a 38-amino-acid chain: Photosystem II reaction center protein M (38 aa).

The helical transmembrane segment at 7-27 threads the bilayer; it reads GFVASILFVLVPTVFLLILYI.

The protein belongs to the PsbM family. In terms of assembly, PSII is composed of 1 copy each of membrane proteins PsbA, PsbB, PsbC, PsbD, PsbE, PsbF, PsbH, PsbI, PsbJ, PsbK, PsbL, PsbM, PsbT, PsbX, PsbY, PsbZ, Psb30/Ycf12, peripheral proteins PsbO, CyanoQ (PsbQ), PsbU, PsbV and a large number of cofactors. It forms dimeric complexes.

It localises to the cellular thylakoid membrane. In terms of biological role, one of the components of the core complex of photosystem II (PSII). PSII is a light-driven water:plastoquinone oxidoreductase that uses light energy to abstract electrons from H(2)O, generating O(2) and a proton gradient subsequently used for ATP formation. It consists of a core antenna complex that captures photons, and an electron transfer chain that converts photonic excitation into a charge separation. This subunit is found at the monomer-monomer interface. The polypeptide is Photosystem II reaction center protein M (Nostoc punctiforme (strain ATCC 29133 / PCC 73102)).